The chain runs to 143 residues: Transcriptional regulator MraZ (143 aa).

SpoVT-AbrB domains lie at 5-47 (EYQH…SLEE) and 76-119 (AAEV…DKSK).

This sequence belongs to the MraZ family. In terms of assembly, forms oligomers.

The protein resides in the cytoplasm. It localises to the nucleoid. This Acetivibrio thermocellus (strain ATCC 27405 / DSM 1237 / JCM 9322 / NBRC 103400 / NCIMB 10682 / NRRL B-4536 / VPI 7372) (Clostridium thermocellum) protein is Transcriptional regulator MraZ.